We begin with the raw amino-acid sequence, 432 residues long: Polypyrimidine tract-binding protein homolog 3 (432 aa).

RRM domains are found at residues 6 to 80 (KVVH…FSSH), 98 to 187 (NRIL…YNND), 245 to 319 (CTVL…FSKH), and 355 to 429 (KMIH…FSQL).

The protein localises to the nucleus. Its function is as follows. Plays a role in pre-mRNA splicing. Binds to the polypyrimidine tract of introns. May promote the binding of U2 snRNP to pre-mRNA. The protein is Polypyrimidine tract-binding protein homolog 3 of Arabidopsis thaliana (Mouse-ear cress).